Consider the following 502-residue polypeptide: ATP synthase subunit alpha (502 aa).

Residue 169–176 coordinates ATP; sequence GDRQTGKT.

The protein belongs to the ATPase alpha/beta chains family. As to quaternary structure, F-type ATPases have 2 components, CF(1) - the catalytic core - and CF(0) - the membrane proton channel. CF(1) has five subunits: alpha(3), beta(3), gamma(1), delta(1), epsilon(1). CF(0) has three main subunits: a(1), b(2) and c(9-12). The alpha and beta chains form an alternating ring which encloses part of the gamma chain. CF(1) is attached to CF(0) by a central stalk formed by the gamma and epsilon chains, while a peripheral stalk is formed by the delta and b chains.

Its subcellular location is the cell inner membrane. It catalyses the reaction ATP + H2O + 4 H(+)(in) = ADP + phosphate + 5 H(+)(out). In terms of biological role, produces ATP from ADP in the presence of a proton gradient across the membrane. The alpha chain is a regulatory subunit. This Geotalea daltonii (strain DSM 22248 / JCM 15807 / FRC-32) (Geobacter daltonii) protein is ATP synthase subunit alpha.